The following is a 388-amino-acid chain: 4-hydroxy-3-methylbut-2-en-1-yl diphosphate synthase (flavodoxin) (388 aa).

Residues C281, C284, C316, and E323 each contribute to the [4Fe-4S] cluster site.

It belongs to the IspG family. Requires [4Fe-4S] cluster as cofactor.

The catalysed reaction is (2E)-4-hydroxy-3-methylbut-2-enyl diphosphate + oxidized [flavodoxin] + H2O + 2 H(+) = 2-C-methyl-D-erythritol 2,4-cyclic diphosphate + reduced [flavodoxin]. It participates in isoprenoid biosynthesis; isopentenyl diphosphate biosynthesis via DXP pathway; isopentenyl diphosphate from 1-deoxy-D-xylulose 5-phosphate: step 5/6. In terms of biological role, converts 2C-methyl-D-erythritol 2,4-cyclodiphosphate (ME-2,4cPP) into 1-hydroxy-2-methyl-2-(E)-butenyl 4-diphosphate. The sequence is that of 4-hydroxy-3-methylbut-2-en-1-yl diphosphate synthase (flavodoxin) from Paenarthrobacter aurescens (strain TC1).